The primary structure comprises 507 residues: ATP synthase subunit alpha, chloroplastic (507 aa).

170 to 177 (GDRQTGKT) contributes to the ATP binding site. Phosphoserine is present on S383.

The protein belongs to the ATPase alpha/beta chains family. In terms of assembly, F-type ATPases have 2 components, CF(1) - the catalytic core - and CF(0) - the membrane proton channel. CF(1) has five subunits: alpha(3), beta(3), gamma(1), delta(1), epsilon(1). CF(0) has four main subunits: a, b, b' and c. Only phosphorylated in mesophyll cells, and only when cells are grown under high rather than low light regimes (70 vs 900 umol photons/m-2/s).

The protein localises to the plastid. It is found in the chloroplast thylakoid membrane. It catalyses the reaction ATP + H2O + 4 H(+)(in) = ADP + phosphate + 5 H(+)(out). Produces ATP from ADP in the presence of a proton gradient across the membrane. The alpha chain is a regulatory subunit. This chain is ATP synthase subunit alpha, chloroplastic, found in Zea mays (Maize).